A 353-amino-acid polypeptide reads, in one-letter code: Protein RecA (353 aa).

75–82 (GPESSGKT) contributes to the ATP binding site.

This sequence belongs to the RecA family.

The protein localises to the cytoplasm. Functionally, can catalyze the hydrolysis of ATP in the presence of single-stranded DNA, the ATP-dependent uptake of single-stranded DNA by duplex DNA, and the ATP-dependent hybridization of homologous single-stranded DNAs. It interacts with LexA causing its activation and leading to its autocatalytic cleavage. This chain is Protein RecA, found in Cupriavidus necator (Alcaligenes eutrophus).